The chain runs to 143 residues: Small ribosomal subunit protein uS12 (143 aa).

A compositionally biased stretch (basic residues) spans 1–20 (MGKCRGLRTARKLRSHRRDH). The segment at 1 to 26 (MGKCRGLRTARKLRSHRRDHKWHDKQ) is disordered. K37 participates in a covalent cross-link: Glycyl lysine isopeptide (Lys-Gly) (interchain with G-Cter in SUMO2). Position 54 is an N6-succinyllysine (K54). At P62 the chain carries 3-hydroxyproline. K135 is modified (N6-acetyllysine).

This sequence belongs to the universal ribosomal protein uS12 family. Component of the 40S small ribosomal subunit. Part of the small subunit (SSU) processome, composed of more than 70 proteins and the RNA chaperone small nucleolar RNA (snoRNA) U3. In terms of assembly, (Microbial infection) Interacts with the African swine fever virus (ASFV) ubiquitin-conjugating enzyme UBCv1; this interaction probably plays a role in the viral regulation of host protein synthesis. In terms of processing, hydroxylation at Pro-62 affects translation termination efficiency.

It is found in the cytoplasm. The protein resides in the cytosol. The protein localises to the rough endoplasmic reticulum. It localises to the nucleus. Its subcellular location is the nucleolus. Functionally, component of the ribosome, a large ribonucleoprotein complex responsible for the synthesis of proteins in the cell. The small ribosomal subunit (SSU) binds messenger RNAs (mRNAs) and translates the encoded message by selecting cognate aminoacyl-transfer RNA (tRNA) molecules. The large subunit (LSU) contains the ribosomal catalytic site termed the peptidyl transferase center (PTC), which catalyzes the formation of peptide bonds, thereby polymerizing the amino acids delivered by tRNAs into a polypeptide chain. The nascent polypeptides leave the ribosome through a tunnel in the LSU and interact with protein factors that function in enzymatic processing, targeting, and the membrane insertion of nascent chains at the exit of the ribosomal tunnel. Plays an important role in translational accuracy. Part of the small subunit (SSU) processome, first precursor of the small eukaryotic ribosomal subunit. During the assembly of the SSU processome in the nucleolus, many ribosome biogenesis factors, an RNA chaperone and ribosomal proteins associate with the nascent pre-rRNA and work in concert to generate RNA folding, modifications, rearrangements and cleavage as well as targeted degradation of pre-ribosomal RNA by the RNA exosome. In Sus scrofa (Pig), this protein is Small ribosomal subunit protein uS12 (RPS23).